Here is a 115-residue protein sequence, read N- to C-terminus: MKTMRKITAIIRREKLEDVKDALELMGIHGMTVSDVKGRGQQMGIRESYRGMDYCVDLLPKVQLEIVVDSEDLERTVEAISENARTGDVGDGKIFVTDVIDVVRIRTGEHGRDAI.

An O-UMP-tyrosine modification is found at Tyr54.

Belongs to the P(II) protein family.

Could be involved in the regulation of nitrogen fixation. In Methanothermobacter thermautotrophicus (strain ATCC 29096 / DSM 1053 / JCM 10044 / NBRC 100330 / Delta H) (Methanobacterium thermoautotrophicum), this protein is Nitrogen regulatory protein P-II 1.